Reading from the N-terminus, the 535-residue chain is CTP synthase (535 aa).

Residues 300–535 (RIGIVGKYAP…LVSASYERSK (236 aa)) enclose the Glutamine amidotransferase type-1 domain. Active-site for GATase activity residues include cysteine 385, histidine 509, and glutamate 511.

The protein belongs to the CTP synthase family.

The enzyme catalyses UTP + L-glutamine + ATP + H2O = CTP + L-glutamate + ADP + phosphate + 2 H(+). It functions in the pathway pyrimidine metabolism; CTP biosynthesis via de novo pathway; CTP from UDP: step 2/2. Its function is as follows. Catalyzes the ATP-dependent amination of UTP to CTP with either L-glutamine or ammonia as the source of nitrogen. This is CTP synthase from Encephalitozoon cuniculi (strain GB-M1) (Microsporidian parasite).